Here is a 353-residue protein sequence, read N- to C-terminus: Photosystem II protein D1 (353 aa).

Thr2 bears the N-acetylthreonine mark. A Phosphothreonine modification is found at Thr2. A run of 3 helical transmembrane segments spans residues 29 to 46 (YIGW…TATS), 118 to 133 (HFLL…EWEL), and 142 to 156 (WIAV…AATA). Position 118 (His118) interacts with chlorophyll a. Tyr126 serves as a coordination point for pheophytin a. [CaMn4O5] cluster contacts are provided by Asp170 and Glu189. The chain crosses the membrane as a helical span at residues 197–218 (FHMLGVAGVFGGSLFSAMHGSL). His198 is a chlorophyll a binding site. A quinone is bound by residues His215 and 264 to 265 (SF). Fe cation is bound at residue His215. Residue His272 coordinates Fe cation. Residues 274 to 288 (FLAAWPVVGIWFTAL) traverse the membrane as a helical segment. His332, Glu333, Asp342, and Ala344 together coordinate [CaMn4O5] cluster. Residues 345 to 353 (ALEVPSING) constitute a propeptide that is removed on maturation.

The protein belongs to the reaction center PufL/M/PsbA/D family. In terms of assembly, PSII is composed of 1 copy each of membrane proteins PsbA, PsbB, PsbC, PsbD, PsbE, PsbF, PsbH, PsbI, PsbJ, PsbK, PsbL, PsbM, PsbT, PsbX, PsbY, PsbZ, Psb30/Ycf12, at least 3 peripheral proteins of the oxygen-evolving complex and a large number of cofactors. It forms dimeric complexes. The cofactor is The D1/D2 heterodimer binds P680, chlorophylls that are the primary electron donor of PSII, and subsequent electron acceptors. It shares a non-heme iron and each subunit binds pheophytin, quinone, additional chlorophylls, carotenoids and lipids. D1 provides most of the ligands for the Mn4-Ca-O5 cluster of the oxygen-evolving complex (OEC). There is also a Cl(-1) ion associated with D1 and D2, which is required for oxygen evolution. The PSII complex binds additional chlorophylls, carotenoids and specific lipids.. Post-translationally, tyr-161 forms a radical intermediate that is referred to as redox-active TyrZ, YZ or Y-Z. C-terminally processed by CTPA; processing is essential to allow assembly of the oxygen-evolving complex and thus photosynthetic growth.

The protein localises to the plastid. It is found in the chloroplast thylakoid membrane. It catalyses the reaction 2 a plastoquinone + 4 hnu + 2 H2O = 2 a plastoquinol + O2. Photosystem II (PSII) is a light-driven water:plastoquinone oxidoreductase that uses light energy to abstract electrons from H(2)O, generating O(2) and a proton gradient subsequently used for ATP formation. It consists of a core antenna complex that captures photons, and an electron transfer chain that converts photonic excitation into a charge separation. The D1/D2 (PsbA/PsbD) reaction center heterodimer binds P680, the primary electron donor of PSII as well as several subsequent electron acceptors. The chain is Photosystem II protein D1 from Agrostis stolonifera (Creeping bentgrass).